The chain runs to 1165 residues: Activity-dependent neuroprotector homeobox protein 2 (1165 aa).

A C2H2-type 1 zinc finger spans residues 73-96; sequence YCCSLCRYSTKVLTSLKNHLHRYH. The C2H2-type 2; degenerate zinc finger occupies 106–128; the sequence is IPCPNCPFSSQPRVVGKHFRMFH. Lysine 146 is covalently cross-linked (Glycyl lysine isopeptide (Lys-Gly) (interchain with G-Cter in SUMO2)). The C2H2-type 3; degenerate zinc finger occupies 155–178; it reads FTCLKCNFSNTLYYSMKKHVLVAH. The C2H2-type 4 zinc finger occupies 215 to 240; it reads YYCKKCSAIASSQDALMYHILTSDAH. Low complexity predominate over residues 303–318; the sequence is SGTVQSVTVTPGTSGS. The disordered stretch occupies residues 303–327; that stretch reads SGTVQSVTVTPGTSGSLTHSPPTTA. The C2H2-type 5; degenerate zinc-finger motif lies at 696–718; the sequence is KTCPVCNELFPSNVYQVHMEVAH. Residues 724–746 form a C2H2-type 6; degenerate zinc finger; that stretch reads QLCQVCNELFPANVYQVHMEVAH. The segment at 777–798 adopts a C2H2-type 7; degenerate zinc-finger fold; the sequence is VRCLSCKCLVSQEELMHHLLMH. 2 consecutive C2H2-type zinc fingers follow at residues 800–823 and 905–935; these read LGCLFCPCTFHDVRGLVEHSRTKH and LTCPFCLSTFMTADAYELHLKERHHVMPTVH. Positions 1005-1068 are disordered; it reads PVKRKLPEGH…SGPSEDSLQA (64 aa). Glycyl lysine isopeptide (Lys-Gly) (interchain with G-Cter in SUMO2) cross-links involve residues lysine 1009 and lysine 1048. A compositionally biased stretch (basic and acidic residues) spans 1009 to 1024; it reads KLPEGHLGPEDQRDGE. A DNA-binding region (homeobox) is located at residues 1090–1132; sequence DYFHRRPYPSRKEVELLSSLLWVWKIDVASFFGKRRYICMKAI.

The protein belongs to the krueppel C2H2-type zinc-finger protein family. May interact with SMARCA4/BRG1. Expressed widely, with the highest level in the brain.

Its subcellular location is the nucleus. Functionally, may be involved in transcriptional regulation. May play a role in neuronal function; perhaps involved in protection of brain tissues from oxidative stress. May be involved in erythroid differentiation. This chain is Activity-dependent neuroprotector homeobox protein 2 (Adnp2), found in Mus musculus (Mouse).